Reading from the N-terminus, the 114-residue chain is Ig kappa chain V-I region S107A (114 aa).

Positions 1–23 (DIVMTQSPTFLAVTASKKVTISC) are framework-1. Cysteines 23 and 94 form a disulfide. The complementarity-determining-1 stretch occupies residues 24 to 40 (TASESLYSSKHKVHYLA). A framework-2 region spans residues 41 to 55 (WYQKKPEQSPKLLIY). The segment at 56–62 (GASNRYI) is complementarity-determining-2. The framework-3 stretch occupies residues 63–94 (GVPDRFTGSGSGTDFTLTISSVQVEDLTHYYC). A complementarity-determining-3 region spans residues 95-103 (AQFYSYPLT). The tract at residues 104–113 (FGAGTKLELK) is framework-4.

In terms of biological role, anti-phosphocholine antibody. In Mus musculus (Mouse), this protein is Ig kappa chain V-I region S107A (Igkv7-33).